The primary structure comprises 298 residues: ATP synthase gamma chain (298 aa).

This sequence belongs to the ATPase gamma chain family. As to quaternary structure, F-type ATPases have 2 components, CF(1) - the catalytic core - and CF(0) - the membrane proton channel. CF(1) has five subunits: alpha(3), beta(3), gamma(1), delta(1), epsilon(1). CF(0) has three main subunits: a, b and c.

It is found in the cell inner membrane. In terms of biological role, produces ATP from ADP in the presence of a proton gradient across the membrane. The gamma chain is believed to be important in regulating ATPase activity and the flow of protons through the CF(0) complex. The sequence is that of ATP synthase gamma chain from Desulforapulum autotrophicum (strain ATCC 43914 / DSM 3382 / VKM B-1955 / HRM2) (Desulfobacterium autotrophicum).